A 548-amino-acid polypeptide reads, in one-letter code: Lysine--tRNA ligase (548 aa).

A 'HIGH' region motif is present at residues 52 to 60; that stretch reads PSGLPHIGT. The short motif at 300 to 304 is the 'KMSKS' region element; the sequence is KISKS. Lysine 303 contributes to the ATP binding site.

The protein belongs to the class-I aminoacyl-tRNA synthetase family.

Its subcellular location is the cytoplasm. The enzyme catalyses tRNA(Lys) + L-lysine + ATP = L-lysyl-tRNA(Lys) + AMP + diphosphate. This chain is Lysine--tRNA ligase, found in Mesorhizobium japonicum (strain LMG 29417 / CECT 9101 / MAFF 303099) (Mesorhizobium loti (strain MAFF 303099)).